A 221-amino-acid polypeptide reads, in one-letter code: MSDSEEESQDRQLKIVVLGDGTSGKTSLATCFAQETFGKQYKQTIGLDFFLRRITLPGNLNVTLQVWDIGGQTIGGKMLDKYIYGAQGILLVYDITNYQSFENLEDWYSVVKTVSEESETQPLVALVGNKIDLEHMRTVKPDKHLRFCQENGFSSHFVSAKTGDSVFLCFQKVAAEILGIKLNKAEIEQSQRVVKADIVNYNQEPMSRTVNPPRSSMCAVQ.

Position 2 is an N-acetylserine (Ser-2). Ser-8 bears the Phosphoserine mark. Gly-21, Gly-24, Lys-25, Thr-26, Ser-27, Gly-38, Lys-39, Tyr-41, and Thr-44 together coordinate GTP. Thr-26 contacts Mg(2+). The switch I stretch occupies residues 35–49; sequence ETFGKQYKQTIGLDF. Mg(2+) contacts are provided by Thr-44 and Asp-68. Residues 68 to 85 form a switch II region; sequence DIGGQTIGGKMLDKYIYG. Positions 71, 129, 130, 132, 160, and 161 each coordinate GTP. Cys-218 is subject to Cysteine methyl ester. The S-farnesyl cysteine moiety is linked to residue Cys-218. A propeptide spans 219-221 (removed in mature form); that stretch reads AVQ.

This sequence belongs to the small GTPase superfamily. Rab family. In terms of assembly, interacts (prenylated form) with PDE6D; the interaction promotes RAB28 delivery to the photoreceptor outer segments. Interacts with KCNJ13; the interaction may facilitate cone outer segments phagocytosis. Interacts with RELA; the interaction contributes to RELA transport from cytoplasm to nucleus. It depends on Mg(2+) as a cofactor. Post-translationally, isoprenylated. Testis, brain, and to much lower levels heart, skeletal muscle and fat cells. Expressed in the retina.

The protein resides in the cell membrane. It localises to the cytoplasm. Its subcellular location is the cytoskeleton. It is found in the cilium basal body. The protein localises to the nucleus. The enzyme catalyses GTP + H2O = GDP + phosphate + H(+). Regulated by guanine nucleotide exchange factors (GEFs) which promote the exchange of bound GDP for free GTP. Regulated by GTPase activating proteins (GAPs) which increase the GTP hydrolysis activity. Inhibited by GDP dissociation inhibitors (GDIs). In terms of biological role, the small GTPases Rab are key regulators of intracellular membrane trafficking, from the formation of transport vesicles to their fusion with membranes. Rabs cycle between an inactive GDP-bound form and an active GTP-bound form that is able to recruit to membranes different sets of downstream effectors directly responsible for vesicle formation, movement, tethering and fusion. RAB28 is required for shedding and phagocytosis of cone cell outer segments (OS) discs in the retina. Also participates in nuclear factor kappa-B p65/RELA nuclear transport in endothelial cells. In Rattus norvegicus (Rat), this protein is Ras-related protein Rab-28.